The sequence spans 289 residues: 5'-3' exonuclease (289 aa).

In terms of domain architecture, 5'-3' exonuclease spans 166 to 256; it reads VEPQKIPDYL…EEDLKIKRPD (91 aa).

In terms of biological role, 5'-3' exonuclease acting preferentially on double-stranded DNA. In Aquifex aeolicus (strain VF5), this protein is 5'-3' exonuclease.